The chain runs to 96 residues: Protein RnfH (96 aa).

It belongs to the UPF0125 (RnfH) family.

This Citrobacter koseri (strain ATCC BAA-895 / CDC 4225-83 / SGSC4696) protein is Protein RnfH.